A 483-amino-acid chain; its full sequence is ATP synthase subunit beta (483 aa).

169–176 (GGAGVGKT) contacts ATP.

Belongs to the ATPase alpha/beta chains family. F-type ATPases have 2 components, CF(1) - the catalytic core - and CF(0) - the membrane proton channel. CF(1) has five subunits: alpha(3), beta(3), gamma(1), delta(1), epsilon(1). CF(0) has three main subunits: a(1), b(2) and c(9-12). The alpha and beta chains form an alternating ring which encloses part of the gamma chain. CF(1) is attached to CF(0) by a central stalk formed by the gamma and epsilon chains, while a peripheral stalk is formed by the delta and b chains.

Its subcellular location is the cell membrane. It carries out the reaction ATP + H2O + 4 H(+)(in) = ADP + phosphate + 5 H(+)(out). Its function is as follows. Produces ATP from ADP in the presence of a proton gradient across the membrane. The catalytic sites are hosted primarily by the beta subunits. This chain is ATP synthase subunit beta, found in Rhodococcus jostii (strain RHA1).